Reading from the N-terminus, the 760-residue chain is Prolyl endopeptidase FAP (760 aa).

The Cytoplasmic segment spans residues 1-4 (MKTW). Residues 5 to 25 (LKIVFGVATSAVLALLVMCIV) traverse the membrane as a helical; Signal-anchor for type II membrane protein segment. At 26-760 (LRPSRVHNSE…FLKQCFSLSD (735 aa)) the chain is on the extracellular side. 3 N-linked (GlcNAc...) asparagine glycosylation sites follow: asparagine 49, asparagine 92, and asparagine 99. Substrate is bound by residues glutamate 203 and glutamate 204. 2 N-linked (GlcNAc...) asparagine glycosylation sites follow: asparagine 227 and asparagine 314. Cystine bridges form between cysteine 321–cysteine 332, cysteine 438–cysteine 441, and cysteine 448–cysteine 466. The stretch at 481 to 512 (TDQEIKILEDNKELENALKNIQLPKEEIKKLK) forms a coiled coil. The active-site Charge relay system is serine 624. A disulfide bridge links cysteine 643 with cysteine 755. An N-linked (GlcNAc...) asparagine glycan is attached at asparagine 679. Residues aspartate 702 and histidine 734 each act as charge relay system in the active site.

The protein belongs to the peptidase S9B family. Homodimer; homodimerization is required for activity of both plasma membrane and soluble forms. The monomer is inactive. Heterodimer with DPP4. Interacts with PLAUR; the interaction occurs at the cell surface of invadopodia membranes. Interacts with ITGB1. Interacts with ITGA3. Associates with integrin alpha-3/beta-1; the association occurs in a collagen-dependent manner at the cell surface of invadopodia membranes. Post-translationally, N-glycosylated. In terms of processing, the N-terminus may be blocked.

The protein resides in the cell surface. Its subcellular location is the cell membrane. The protein localises to the cell projection. It is found in the lamellipodium membrane. It localises to the invadopodium membrane. The protein resides in the ruffle membrane. Its subcellular location is the membrane. The protein localises to the secreted. The enzyme catalyses Release of an N-terminal dipeptide, Xaa-Yaa-|-Zaa-, from a polypeptide, preferentially when Yaa is Pro, provided Zaa is neither Pro nor hydroxyproline.. The catalysed reaction is Hydrolysis of Pro-|-Xaa &gt;&gt; Ala-|-Xaa in oligopeptides.. With respect to regulation, gelatinase activity is inhibited by serine-protease inhibitors, such as phenylmethylsulfonyl fluoride (PMSF), 4-(2-aminoethyl)-benzenesulfonyl fluoride hydrochloride (AEBSF), 4-amidino phenylsulfonyl fluoride (APSF) and diisopropyl fluorophosphate (DFP), N-ethylmaleimide (NEM) and phenylmethylsulfonyl fluoride (PMSF). Dipeptidyl peptidase activity is inhibited by 2,2'-azino-bis(3-ethylbenzthiazoline-6-sulfonic acid), diisopropylfluorophosphate (DFP). Prolyl endopeptidase activity is inhibited by the boronic acid peptide Ac-Gly-BoroPro, Ac-Gly-Pro-chloromethyl ketone and Thr-Ser-Gly-chloromethyl ketone. Its function is as follows. Cell surface glycoprotein serine protease that participates in extracellular matrix degradation and involved in many cellular processes including tissue remodeling, fibrosis, wound healing, inflammation and tumor growth. Both plasma membrane and soluble forms exhibit post-proline cleaving endopeptidase activity, with a marked preference for Ala/Ser-Gly-Pro-Ser/Asn/Ala consensus sequences, on substrate such as alpha-2-antiplasmin SERPINF2 and SPRY2. Degrade also gelatin, heat-denatured type I collagen, but not native collagen type I and IV, vibronectin, tenascin, laminin, fibronectin, fibrin or casein. Also has dipeptidyl peptidase activity, exhibiting the ability to hydrolyze the prolyl bond two residues from the N-terminus of synthetic dipeptide substrates provided that the penultimate residue is proline, with a preference for Ala-Pro, Ile-Pro, Gly-Pro, Arg-Pro and Pro-Pro. Natural neuropeptide hormones for dipeptidyl peptidase are the neuropeptide Y (NPY), peptide YY (PYY), substance P (TAC1) and brain natriuretic peptide 32 (NPPB). The plasma membrane form, in association with either DPP4, PLAUR or integrins, is involved in the pericellular proteolysis of the extracellular matrix (ECM), and hence promotes cell adhesion, migration and invasion through the ECM. Plays a role in tissue remodeling during development and wound healing. Participates in the cell invasiveness towards the ECM in malignant melanoma cancers. Enhances tumor growth progression by increasing angiogenesis, collagen fiber degradation and apoptosis and by reducing antitumor response of the immune system. Promotes glioma cell invasion through the brain parenchyma by degrading the proteoglycan brevican. Acts as a tumor suppressor in melanocytic cells through regulation of cell proliferation and survival in a serine protease activity-independent manner. This chain is Prolyl endopeptidase FAP, found in Bos taurus (Bovine).